Consider the following 233-residue polypeptide: tRNA (guanine-N(7)-)-methyltransferase (233 aa).

4 residues coordinate S-adenosyl-L-methionine: glutamate 65, glutamate 90, aspartate 117, and aspartate 139. Aspartate 139 is an active-site residue. Residues lysine 143, aspartate 175, and 212 to 215 (TRYE) each bind substrate.

The protein belongs to the class I-like SAM-binding methyltransferase superfamily. TrmB family.

It catalyses the reaction guanosine(46) in tRNA + S-adenosyl-L-methionine = N(7)-methylguanosine(46) in tRNA + S-adenosyl-L-homocysteine. The protein operates within tRNA modification; N(7)-methylguanine-tRNA biosynthesis. Functionally, catalyzes the formation of N(7)-methylguanine at position 46 (m7G46) in tRNA. The chain is tRNA (guanine-N(7)-)-methyltransferase from Roseobacter denitrificans (strain ATCC 33942 / OCh 114) (Erythrobacter sp. (strain OCh 114)).